The primary structure comprises 390 residues: Zinc finger CCCH domain-containing protein 46 (390 aa).

Residues 2–29 (SRRQEICRNFQRGSCKYGAQCRYLHASP) form a C3H1-type zinc finger. The tract at residues 27 to 129 (ASPHQQQQQQ…AAHTSCEDPQ (103 aa)) is disordered. Over residues 48 to 76 (GSRQQQQPSFGSQFQQQQQQQQKPNPFGF) the composition is skewed to low complexity. Polar residues predominate over residues 106–129 (PTKQTEAVQPPQAQAAHTSCEDPQ). Positions 146–211 (WKLTCYAHLR…FTNLLNSARP (66 aa)) are required for transcriptional activation activity. Residues 230–248 (SSFGASQTNGPPVFSSFSQ) are compositionally biased toward polar residues. The tract at residues 230-284 (SSFGASQTNGPPVFSSFSQIGAATNIGPGPGTTAPGMPASSPFGHPSSAPLAAPT) is disordered. The segment covering 250–268 (GAATNIGPGPGTTAPGMPA) has biased composition (low complexity).

As to quaternary structure, interacts with GSK1 and GSK4. Phosphorylated on serine and threonine residues by GSK1. Phosphorylation represses nuclear localization. In terms of tissue distribution, expressed in the adaxial face of the collar, nodes and the basal region of elongating internodes.

Its subcellular location is the nucleus. The protein resides in the cytoplasm. Transcriptional activator that binds double-stranded DNA and the single-stranded RNA polymers poly(rA), poly(rU) and poly(rG), but not poly(rC). Mediates optimal plant architecture through brassinosteroid (BR) signaling. May act as a negative regulator in sterol homeostasis. Acts as a negative regulator of BR signaling. Binds to the specific DNA sequence 5'-CTCGC-3' of BZR1 promoter and negatively regulates BZR1. Acts as an antagonistic transcription factor of BZR1 to attenuate the BR signaling pathway and regulate leaf bending. Represses the expression of ILI1, and activates that of IBH1 to balance the regulation activity of BZR1. The sequence is that of Zinc finger CCCH domain-containing protein 46 from Oryza sativa subsp. japonica (Rice).